Consider the following 856-residue polypeptide: Histone-lysine N-methyltransferase EZA1 (856 aa).

Positions Met1–Arg11 are enriched in polar residues. 3 disordered regions span residues Met1–Asn34, Val66–Met87, and Asn366–Ser473. Residues Asp17–Arg28 show a composition bias toward acidic residues. Residues Gly22 to Arg49 adopt a coiled-coil conformation. The span at Pro68–Met87 shows a compositional bias: polar residues. A compositionally biased stretch (basic and acidic residues) spans Glu374–Asn392. A compositionally biased stretch (polar residues) spans Asp393–Ser419. Residues Lys438–Gly451 show a composition bias toward basic and acidic residues. Residues Pro489–Ser539 form the SANT domain. The region spanning Trp594–Glu693 is the CXC domain. The region spanning Gln707–Arg822 is the SET domain. Tyr821 is an S-adenosyl-L-methionine binding site. The tract at residues Gln827–His856 is disordered. Residues Arg833–Ile845 show a composition bias toward basic and acidic residues. Positions Ser838–Ile845 match the Nuclear localization signal motif. A compositionally biased stretch (basic residues) spans Thr846–His856.

This sequence belongs to the class V-like SAM-binding methyltransferase superfamily. Histone-lysine methyltransferase family. EZ subfamily. Component of the plant homeodomain / polycomb repressive complex 2 (PHD-PRC2) large complex during prolonged cold, composed of core PRC2 components (VRN2, EZA1, FIE and MSI1), and three related PHD finger proteins (VIL1, VIL2 and VIN3) that mediates histone H3 trimethylation on 'Lys-27' H3K27me3. Interacts with TAF13. Interacts with EOL1. Interacts (via SANT domain) with HXK1 in the nucleus.

Its subcellular location is the nucleus. It catalyses the reaction L-lysyl(27)-[histone H3] + 3 S-adenosyl-L-methionine = N(6),N(6),N(6)-trimethyl-L-lysyl(27)-[histone H3] + 3 S-adenosyl-L-homocysteine + 3 H(+). Its function is as follows. Polycomb group (PcG) protein. Catalytic subunit of some PcG multiprotein complex, which methylates 'Lys-27' of histone H3, leading to transcriptional repression of the affected target genes, mainly abscisic acid (ABA) responsive elements. PcG proteins act by forming multiprotein complexes, which are required to maintain the transcriptionally repressive state of homeotic genes throughout development. PcG proteins are not required to initiate repression, but to maintain it during later stages of development. Forms a nuclear complex with CLF and HXK1 to target common glucose-responsive genes and regulate glucose signaling by glucose-mediated gene repression. Affects the recruitment of HXK1 to the target chromatin. In Arabidopsis thaliana (Mouse-ear cress), this protein is Histone-lysine N-methyltransferase EZA1.